The sequence spans 113 residues: Pro-FMRFamide-related neuropeptide FF (113 aa).

A signal peptide spans 1-20; sequence MDSRQAAALLVLLLLIDGGC. The propeptide occupies 21–65; that stretch reads AEGPGGQQEDQLSAEEDSEPLPPQDAQTSGSLLHYLLQAMERPGR. Residues 22–48 form a disordered region; sequence EGPGGQQEDQLSAEEDSEPLPPQDAQT. Phe-76 is subject to Phenylalanine amide. Residues 79–92 constitute a propeptide that is removed on maturation; it reads NTQGSWRNEWLSPR. Phe-110 bears the Phenylalanine amide mark.

Belongs to the FARP (FMRFamide related peptide) family.

The protein localises to the secreted. Functionally, morphine modulating peptides. Have wide-ranging physiologic effects, including the modulation of morphine-induced analgesia, elevation of arterial blood pressure, and increased somatostatin secretion from the pancreas. Neuropeptide FF potentiates and sensitizes ASIC1 and ASIC3 channels. The protein is Pro-FMRFamide-related neuropeptide FF of Homo sapiens (Human).